The sequence spans 209 residues: Thiamine-phosphate synthase (209 aa).

Residues 39–43 (QLREK) and Asn71 contribute to the 4-amino-2-methyl-5-(diphosphooxymethyl)pyrimidine site. Mg(2+) is bound by residues Asp72 and Asp91. Ser110 provides a ligand contact to 4-amino-2-methyl-5-(diphosphooxymethyl)pyrimidine. 136 to 138 (TGT) provides a ligand contact to 2-[(2R,5Z)-2-carboxy-4-methylthiazol-5(2H)-ylidene]ethyl phosphate. 4-amino-2-methyl-5-(diphosphooxymethyl)pyrimidine is bound at residue Lys139. 2-[(2R,5Z)-2-carboxy-4-methylthiazol-5(2H)-ylidene]ethyl phosphate-binding positions include Gly166 and 186 to 187 (VS).

It belongs to the thiamine-phosphate synthase family. It depends on Mg(2+) as a cofactor.

It carries out the reaction 2-[(2R,5Z)-2-carboxy-4-methylthiazol-5(2H)-ylidene]ethyl phosphate + 4-amino-2-methyl-5-(diphosphooxymethyl)pyrimidine + 2 H(+) = thiamine phosphate + CO2 + diphosphate. It catalyses the reaction 2-(2-carboxy-4-methylthiazol-5-yl)ethyl phosphate + 4-amino-2-methyl-5-(diphosphooxymethyl)pyrimidine + 2 H(+) = thiamine phosphate + CO2 + diphosphate. The enzyme catalyses 4-methyl-5-(2-phosphooxyethyl)-thiazole + 4-amino-2-methyl-5-(diphosphooxymethyl)pyrimidine + H(+) = thiamine phosphate + diphosphate. It functions in the pathway cofactor biosynthesis; thiamine diphosphate biosynthesis; thiamine phosphate from 4-amino-2-methyl-5-diphosphomethylpyrimidine and 4-methyl-5-(2-phosphoethyl)-thiazole: step 1/1. Functionally, condenses 4-methyl-5-(beta-hydroxyethyl)thiazole monophosphate (THZ-P) and 2-methyl-4-amino-5-hydroxymethyl pyrimidine pyrophosphate (HMP-PP) to form thiamine monophosphate (TMP). This chain is Thiamine-phosphate synthase, found in Clostridium beijerinckii (strain ATCC 51743 / NCIMB 8052) (Clostridium acetobutylicum).